Here is a 323-residue protein sequence, read N- to C-terminus: tRNA dimethylallyltransferase (323 aa).

12 to 19 (GPTAAGKT) provides a ligand contact to ATP. 14–19 (TAAGKT) contacts substrate. 2 interaction with substrate tRNA regions span residues 37–40 (DSAL) and 161–165 (QRLIR).

The protein belongs to the IPP transferase family. Monomer. Mg(2+) serves as cofactor.

It carries out the reaction adenosine(37) in tRNA + dimethylallyl diphosphate = N(6)-dimethylallyladenosine(37) in tRNA + diphosphate. Functionally, catalyzes the transfer of a dimethylallyl group onto the adenine at position 37 in tRNAs that read codons beginning with uridine, leading to the formation of N6-(dimethylallyl)adenosine (i(6)A). This Pseudomonas syringae pv. tomato (strain ATCC BAA-871 / DC3000) protein is tRNA dimethylallyltransferase.